The following is a 125-amino-acid chain: Large ribosomal subunit protein eL8 (125 aa).

This sequence belongs to the eukaryotic ribosomal protein eL8 family. As to quaternary structure, part of the 50S ribosomal subunit. Probably part of the RNase P complex.

The protein localises to the cytoplasm. In terms of biological role, multifunctional RNA-binding protein that recognizes the K-turn motif in ribosomal RNA, the RNA component of RNase P, box H/ACA, box C/D and box C'/D' sRNAs. The polypeptide is Large ribosomal subunit protein eL8 (Metallosphaera sedula (strain ATCC 51363 / DSM 5348 / JCM 9185 / NBRC 15509 / TH2)).